The chain runs to 156 residues: Sec-independent protein translocase protein TatB (156 aa).

Residues Phe-2 to Gly-22 traverse the membrane as a helical segment. Positions Lys-100 to Ile-156 are disordered. The span at Asn-113–Asn-122 shows a compositional bias: polar residues.

The protein belongs to the TatB family. As to quaternary structure, the Tat system comprises two distinct complexes: a TatABC complex, containing multiple copies of TatA, TatB and TatC subunits, and a separate TatA complex, containing only TatA subunits. Substrates initially bind to the TatABC complex, which probably triggers association of the separate TatA complex to form the active translocon.

It localises to the cell membrane. Functionally, part of the twin-arginine translocation (Tat) system that transports large folded proteins containing a characteristic twin-arginine motif in their signal peptide across membranes. Together with TatC, TatB is part of a receptor directly interacting with Tat signal peptides. TatB may form an oligomeric binding site that transiently accommodates folded Tat precursor proteins before their translocation. The protein is Sec-independent protein translocase protein TatB of Corynebacterium glutamicum (strain ATCC 13032 / DSM 20300 / JCM 1318 / BCRC 11384 / CCUG 27702 / LMG 3730 / NBRC 12168 / NCIMB 10025 / NRRL B-2784 / 534).